A 213-amino-acid chain; its full sequence is CASP-like protein UU2 (213 aa).

Positions 1-26 are disordered; sequence MEDPKGAWQSDVFDNGRDFKPHDKAP. Topologically, residues 1-53 are cytoplasmic; that stretch reads MEDPKGAWQSDVFDNGRDFKPHDKAPANVTAGTTPPMYNVGAGGSEGNSKALS. Residues 14–25 are compositionally biased toward basic and acidic residues; the sequence is DNGRDFKPHDKA. Residues 54–74 traverse the membrane as a helical segment; it reads IISIVLRCLSIMFNVVSLGVI. At 75-96 the chain is on the extracellular side; it reads ASNQGKSYFVVWRTLNSSNMQY. An N-linked (GlcNAc...) asparagine glycan is attached at Asn-90. A helical transmembrane segment spans residues 97–117; that stretch reads LFAINVIVLVYCVVQLILSII. At 118-137 the chain is on the cytoplasmic side; sequence NLVQGKMVLSGPTQPASTIT. The chain crosses the membrane as a helical span at residues 138–158; sequence YICDQGLTYMLMAGFGAGVAL. Residues 159–184 lie on the Extracellular side of the membrane; sequence QASVDKGESGMLDCSGANEFCGKNKA. The chain crosses the membrane as a helical span at residues 185–205; that stretch reads SAALSFLGFVCIALSANLNYL. Residues 206 to 213 are Cytoplasmic-facing; that stretch reads RLYFMAAK.

This sequence belongs to the Casparian strip membrane proteins (CASP) family. In terms of assembly, homodimer and heterodimers.

Its subcellular location is the cell membrane. The sequence is that of CASP-like protein UU2 from Physcomitrium patens (Spreading-leaved earth moss).